The chain runs to 886 residues: Phosphatidylinositol 3-kinase catalytic subunit type 3 (886 aa).

The C2 PI3K-type domain maps to 35-184 (YKAVLEDPML…LAKLTKAHRQ (150 aa)). In terms of domain architecture, PIK helical spans 283–519 (DHDLKPNAAT…PKTHEMYLNV (237 aa)). A disordered region spans residues 414-464 (GLEPTKKDSQGPMLESMTTSGINPETDSSQILSNPLPAVSSPAPPSKTKDG). Positions 429–444 (SMTTSGINPETDSSQI) are enriched in polar residues. The span at 445 to 454 (LSNPLPAVSS) shows a compositional bias: low complexity. The PI3K/PI4K catalytic domain occupies 604–870 (IPEKATLFKS…LIDDSVNALF (267 aa)). The segment at 610–616 (LFKSALM) is G-loop. The catalytic loop stretch occupies residues 739-747 (GVGDRHLDN). Positions 758-779 (HIDFGYILGRDPKPLPPPMKLN) are activation loop.

The protein belongs to the PI3/PI4-kinase family. As to quaternary structure, component of the PI3K (PI3KC3/PI3K-III/class III phosphatidylinositol 3-kinase) complex the core of which is composed of the catalytic subunit pik3c3, the regulatory subunit pik3r4 and becn1 associating with additional regulatory/auxiliary subunits to form alternative complex forms. It depends on Mn(2+) as a cofactor.

The protein localises to the midbody. The catalysed reaction is a 1,2-diacyl-sn-glycero-3-phospho-(1D-myo-inositol) + ATP = a 1,2-diacyl-sn-glycero-3-phospho-(1D-myo-inositol-3-phosphate) + ADP + H(+). In terms of biological role, catalytic subunit of the PI3K complex that mediates formation of phosphatidylinositol 3-phosphate; different complex forms are believed to play a role in multiple membrane trafficking pathways. Involved in the transport of lysosomal enzyme precursors to lysosomes. Required for transport from early to late endosomes. The sequence is that of Phosphatidylinositol 3-kinase catalytic subunit type 3 (pik3c3) from Xenopus laevis (African clawed frog).